The sequence spans 657 residues: UvrABC system protein B (657 aa).

The Helicase ATP-binding domain occupies lysine 23–arginine 414. Glycine 36–threonine 43 lines the ATP pocket. Residues tyrosine 89–threonine 112 carry the Beta-hairpin motif. One can recognise a Helicase C-terminal domain in the interval glutamine 431 to isoleucine 593. The region spanning alanine 622 to leucine 657 is the UVR domain.

The protein belongs to the UvrB family. As to quaternary structure, forms a heterotetramer with UvrA during the search for lesions. Interacts with UvrC in an incision complex.

The protein resides in the cytoplasm. The UvrABC repair system catalyzes the recognition and processing of DNA lesions. A damage recognition complex composed of 2 UvrA and 2 UvrB subunits scans DNA for abnormalities. Upon binding of the UvrA(2)B(2) complex to a putative damaged site, the DNA wraps around one UvrB monomer. DNA wrap is dependent on ATP binding by UvrB and probably causes local melting of the DNA helix, facilitating insertion of UvrB beta-hairpin between the DNA strands. Then UvrB probes one DNA strand for the presence of a lesion. If a lesion is found the UvrA subunits dissociate and the UvrB-DNA preincision complex is formed. This complex is subsequently bound by UvrC and the second UvrB is released. If no lesion is found, the DNA wraps around the other UvrB subunit that will check the other stand for damage. This is UvrABC system protein B from Campylobacter jejuni (strain RM1221).